The sequence spans 720 residues: Methionine--tRNA ligase (720 aa).

The 'HIGH' region signature appears at 27 to 37; it reads PYANGQIHIGH. Residues C158, C161, C171, and C174 each coordinate Zn(2+). The 'KMSKS' region signature appears at 348–352; it reads KMSKS. ATP is bound at residue K351. One can recognise a tRNA-binding domain in the interval 614–720; it reads DFAKVDLRIA…SGAKPGMRVK (107 aa).

The protein belongs to the class-I aminoacyl-tRNA synthetase family. MetG type 1 subfamily. Homodimer. Zn(2+) serves as cofactor.

The protein resides in the cytoplasm. The catalysed reaction is tRNA(Met) + L-methionine + ATP = L-methionyl-tRNA(Met) + AMP + diphosphate. Its function is as follows. Is required not only for elongation of protein synthesis but also for the initiation of all mRNA translation through initiator tRNA(fMet) aminoacylation. The protein is Methionine--tRNA ligase of Burkholderia ambifaria (strain ATCC BAA-244 / DSM 16087 / CCUG 44356 / LMG 19182 / AMMD) (Burkholderia cepacia (strain AMMD)).